The primary structure comprises 184 residues: Myosin regulatory light chain 1 (184 aa).

The segment at 1–29 (MFSSKENSLGAKRAPFSSNTTSSQRVAAQ) is disordered. S36 bears the Phosphoserine mark. EF-hand domains follow at residues 45-80 (SQIQELKEAFALLDKDGDGNIGREDVKTMLTSLNQD) and 114-149 (SPRNDLLEAFSTFDDTQSGKIPISTMRDALSSMGDR). Ca(2+) is bound by residues D58, D60, D62, N64, and D69.

As to quaternary structure, binds to myosin II chains myo2 and myo3.

The protein localises to the cytoplasm. In Schizosaccharomyces pombe (strain 972 / ATCC 24843) (Fission yeast), this protein is Myosin regulatory light chain 1 (rlc1).